Reading from the N-terminus, the 637-residue chain is uncharacterized protein (637 aa).

The segment at residues 7–34 is a DNA-binding region (zn(2)-C6 fungal-type); that stretch reads CDLCRLKKIKCSRGQPRCQTCTLFQADC. The C2H2-type; degenerate zinc finger occupies 304 to 327; that stretch reads SLCRTLCGQACLMAQQLNLHRKQS.

The protein resides in the nucleus. This is an uncharacterized protein from Schizosaccharomyces pombe (strain 972 / ATCC 24843) (Fission yeast).